The sequence spans 291 residues: Ajmaline N-methyltransferase (291 aa).

Residues 71–80 (MLDVGCGIGG) are SAM motif I. Residues 133 to 139 (DGAFDLV) carry the Vacuolar targeting signal motif. Residues 134–142 (GAFDLVLSI) are SAM motif II. The tract at residues 161 to 170 (VAASGATIII) is SAM motif III.

This sequence belongs to the class I-like SAM-binding methyltransferase superfamily. gTMT family. Homodimer. Mainly expressed in roots, but barely detectable in stems and flowers.

It is found in the vacuole membrane. The catalysed reaction is ajmaline + S-adenosyl-L-methionine = 4-methylajmaline + S-adenosyl-L-homocysteine + H(+). It carries out the reaction norajmaline + S-adenosyl-L-methionine = 4-methylnorajmaline + S-adenosyl-L-homocysteine + H(+). It participates in alkaloid biosynthesis; ajmaline biosynthesis. Functionally, N-methyltransferase involved in the biosynthesis of ajmaline-type monoterpenoid indole alkaloids (MIAs) natural products, important plant-derived pharmaceuticals used in the therapy of heart disorders. Catalyzes the indole N-methylation of ajmaline to produce 4-methylajmaline. Also able, with a lower efficiency, to mediates the conversion of norajmaline to 4-methylnorajmaline. The protein is Ajmaline N-methyltransferase of Rauvolfia serpentina (Serpentine wood).